The following is a 1072-amino-acid chain: DNA-directed RNA polymerase subunit beta (1072 aa).

It belongs to the RNA polymerase beta chain family. As to quaternary structure, in plastids the minimal PEP RNA polymerase catalytic core is composed of four subunits: alpha, beta, beta', and beta''. When a (nuclear-encoded) sigma factor is associated with the core the holoenzyme is formed, which can initiate transcription.

It localises to the plastid. The protein localises to the chloroplast. It carries out the reaction RNA(n) + a ribonucleoside 5'-triphosphate = RNA(n+1) + diphosphate. Its function is as follows. DNA-dependent RNA polymerase catalyzes the transcription of DNA into RNA using the four ribonucleoside triphosphates as substrates. The polypeptide is DNA-directed RNA polymerase subunit beta (Lepidium virginicum (Virginia pepperweed)).